Reading from the N-terminus, the 131-residue chain is Profilin-8 (131 aa).

Residues Cys-13 and Cys-115 are joined by a disulfide bond. Positions 81–97 (AVIRGKKGAGGITIKKT) match the Involved in PIP2 interaction motif. Phosphothreonine is present on Thr-111.

Belongs to the profilin family. In terms of assembly, occurs in many kinds of cells as a complex with monomeric actin in a 1:1 ratio. In terms of processing, phosphorylated by MAP kinases.

It localises to the cytoplasm. The protein resides in the cytoskeleton. Binds to actin and affects the structure of the cytoskeleton. At high concentrations, profilin prevents the polymerization of actin, whereas it enhances it at low concentrations. The sequence is that of Profilin-8 from Olea europaea (Common olive).